We begin with the raw amino-acid sequence, 192 residues long: Glutaredoxin-C9 (192 aa).

The Glutaredoxin domain maps to 89 to 191 (YERVARMASG…PLLKQAGALW (103 aa)). A disulfide bridge connects residues Cys-109 and Cys-112. The Responsive for interaction with TGA factors motif lies at 189–192 (ALWL).

It belongs to the glutaredoxin family. CC-type subfamily.

The protein localises to the cytoplasm. It is found in the nucleus. Functionally, has a glutathione-disulfide oxidoreductase activity in the presence of NADPH and glutathione reductase. Reduces low molecular weight disulfides and proteins. The chain is Glutaredoxin-C9 (GRXC9) from Oryza sativa subsp. japonica (Rice).